Reading from the N-terminus, the 104-residue chain is Co-chaperonin GroES 5 (104 aa).

This sequence belongs to the GroES chaperonin family. Heptamer of 7 subunits arranged in a ring. Interacts with the chaperonin GroEL.

It localises to the cytoplasm. Together with the chaperonin GroEL, plays an essential role in assisting protein folding. The GroEL-GroES system forms a nano-cage that allows encapsulation of the non-native substrate proteins and provides a physical environment optimized to promote and accelerate protein folding. GroES binds to the apical surface of the GroEL ring, thereby capping the opening of the GroEL channel. This Rhizobium meliloti (strain 1021) (Ensifer meliloti) protein is Co-chaperonin GroES 5.